Reading from the N-terminus, the 312-residue chain is 4-hydroxy-3-methylbut-2-enyl diphosphate reductase (312 aa).

Position 15 (Cys-15) interacts with [4Fe-4S] cluster. Positions 44 and 77 each coordinate (2E)-4-hydroxy-3-methylbut-2-enyl diphosphate. The dimethylallyl diphosphate site is built by His-44 and His-77. 2 residues coordinate isopentenyl diphosphate: His-44 and His-77. Position 99 (Cys-99) interacts with [4Fe-4S] cluster. His-127 is a (2E)-4-hydroxy-3-methylbut-2-enyl diphosphate binding site. His-127 is a dimethylallyl diphosphate binding site. His-127 lines the isopentenyl diphosphate pocket. The Proton donor role is filled by Glu-129. (2E)-4-hydroxy-3-methylbut-2-enyl diphosphate is bound at residue Thr-167. Cys-197 contacts [4Fe-4S] cluster. (2E)-4-hydroxy-3-methylbut-2-enyl diphosphate is bound by residues Ser-225, Ser-226, Asn-227, and Ser-269. Dimethylallyl diphosphate contacts are provided by Ser-225, Ser-226, Asn-227, and Ser-269. The isopentenyl diphosphate site is built by Ser-225, Ser-226, Asn-227, and Ser-269.

It belongs to the IspH family. [4Fe-4S] cluster serves as cofactor.

It carries out the reaction isopentenyl diphosphate + 2 oxidized [2Fe-2S]-[ferredoxin] + H2O = (2E)-4-hydroxy-3-methylbut-2-enyl diphosphate + 2 reduced [2Fe-2S]-[ferredoxin] + 2 H(+). It catalyses the reaction dimethylallyl diphosphate + 2 oxidized [2Fe-2S]-[ferredoxin] + H2O = (2E)-4-hydroxy-3-methylbut-2-enyl diphosphate + 2 reduced [2Fe-2S]-[ferredoxin] + 2 H(+). Its pathway is isoprenoid biosynthesis; dimethylallyl diphosphate biosynthesis; dimethylallyl diphosphate from (2E)-4-hydroxy-3-methylbutenyl diphosphate: step 1/1. It functions in the pathway isoprenoid biosynthesis; isopentenyl diphosphate biosynthesis via DXP pathway; isopentenyl diphosphate from 1-deoxy-D-xylulose 5-phosphate: step 6/6. In terms of biological role, catalyzes the conversion of 1-hydroxy-2-methyl-2-(E)-butenyl 4-diphosphate (HMBPP) into a mixture of isopentenyl diphosphate (IPP) and dimethylallyl diphosphate (DMAPP). Acts in the terminal step of the DOXP/MEP pathway for isoprenoid precursor biosynthesis. This is 4-hydroxy-3-methylbut-2-enyl diphosphate reductase from Azoarcus sp. (strain BH72).